A 120-amino-acid polypeptide reads, in one-letter code: uncharacterized protein (120 aa).

The protein belongs to the HesB/IscA family.

This is an uncharacterized protein from Bacillus subtilis (strain 168).